The chain runs to 234 residues: 7-carboxy-7-deazaguanine synthase (234 aa).

The tract at residues 1 to 28 (MPLNCDTKTAGEISSSIPSGSGSHQPAA) is disordered. The span at 13-23 (ISSSIPSGSGS) shows a compositional bias: low complexity. Residues 42 to 44 (LQG) and Arg57 each bind substrate. In terms of domain architecture, Radical SAM core spans 48-234 (TSGYPTIFIR…LQLHKFIGLP (187 aa)). Residues Cys61, Cys65, and Cys68 each coordinate [4Fe-4S] cluster. Thr70 contacts Mg(2+). Position 100 (Thr100) interacts with substrate. Gly102 is an S-adenosyl-L-methionine binding site. Pro234 is a binding site for substrate.

The protein belongs to the radical SAM superfamily. 7-carboxy-7-deazaguanine synthase family. As to quaternary structure, homodimer. [4Fe-4S] cluster serves as cofactor. The cofactor is S-adenosyl-L-methionine. It depends on Mg(2+) as a cofactor.

The enzyme catalyses 6-carboxy-5,6,7,8-tetrahydropterin + H(+) = 7-carboxy-7-deazaguanine + NH4(+). Its pathway is purine metabolism; 7-cyano-7-deazaguanine biosynthesis. Catalyzes the complex heterocyclic radical-mediated conversion of 6-carboxy-5,6,7,8-tetrahydropterin (CPH4) to 7-carboxy-7-deazaguanine (CDG), a step common to the biosynthetic pathways of all 7-deazapurine-containing compounds. The polypeptide is 7-carboxy-7-deazaguanine synthase (Methanospirillum hungatei JF-1 (strain ATCC 27890 / DSM 864 / NBRC 100397 / JF-1)).